Here is a 287-residue protein sequence, read N- to C-terminus: Ribosomal RNA small subunit methyltransferase I (287 aa).

The protein belongs to the methyltransferase superfamily. RsmI family.

Its subcellular location is the cytoplasm. It carries out the reaction cytidine(1402) in 16S rRNA + S-adenosyl-L-methionine = 2'-O-methylcytidine(1402) in 16S rRNA + S-adenosyl-L-homocysteine + H(+). Its function is as follows. Catalyzes the 2'-O-methylation of the ribose of cytidine 1402 (C1402) in 16S rRNA. This Streptococcus pyogenes serotype M6 (strain ATCC BAA-946 / MGAS10394) protein is Ribosomal RNA small subunit methyltransferase I.